Consider the following 280-residue polypeptide: Ribosomal RNA small subunit methyltransferase A (280 aa).

Residues Asn-28, Leu-30, Gly-55, Glu-77, Asp-103, and Asn-122 each contribute to the S-adenosyl-L-methionine site.

This sequence belongs to the class I-like SAM-binding methyltransferase superfamily. rRNA adenine N(6)-methyltransferase family. RsmA subfamily.

The protein resides in the cytoplasm. The catalysed reaction is adenosine(1518)/adenosine(1519) in 16S rRNA + 4 S-adenosyl-L-methionine = N(6)-dimethyladenosine(1518)/N(6)-dimethyladenosine(1519) in 16S rRNA + 4 S-adenosyl-L-homocysteine + 4 H(+). Specifically dimethylates two adjacent adenosines (A1518 and A1519) in the loop of a conserved hairpin near the 3'-end of 16S rRNA in the 30S particle. May play a critical role in biogenesis of 30S subunits. This Dinoroseobacter shibae (strain DSM 16493 / NCIMB 14021 / DFL 12) protein is Ribosomal RNA small subunit methyltransferase A.